Here is a 98-residue protein sequence, read N- to C-terminus: Citrate lyase acyl carrier protein (98 aa).

Residue S14 is modified to O-(phosphoribosyl dephospho-coenzyme A)serine.

Belongs to the CitD family. As to quaternary structure, oligomer with a subunit composition of (alpha,beta,gamma)6.

The protein resides in the cytoplasm. Covalent carrier of the coenzyme of citrate lyase. In Shigella flexneri, this protein is Citrate lyase acyl carrier protein.